The sequence spans 243 residues: VQ motif-containing protein 33 (243 aa).

The span at 1 to 16 (MEVSTSSMSSKPEQMQ) shows a compositional bias: polar residues. Positions 1–49 (MEVSTSSMSSKPEQMQNPPPMISSPRFQPQIISPHHHDQHQHLSNPYPT) are disordered. The VQ signature appears at 59-68 (FKQVVQMLTG). Disordered regions lie at residues 69–98 (SSTDTTTGKHHEAPSPVNNNNKGSSFSIPP) and 138–162 (FTGGNSSHHQSPRFSPRNSSSSENI). 2 positions are modified to phosphoserine: S83 and S95. Residues 84-98 (PVNNNNKGSSFSIPP) show a composition bias toward polar residues. Position 139 is a phosphothreonine (T139). A phosphoserine mark is found at S148, S152, S165, S167, and S178. Over residues 149–162 (PRFSPRNSSSSENI) the composition is skewed to low complexity. A disordered region spans residues 180–243 (VTPLRSNDDP…FPVASPARNS (64 aa)). T181 is subject to Phosphothreonine. The span at 191–201 (NKSSPLSLGNS) shows a compositional bias: polar residues. Phosphoserine is present on residues S218 and S221. Phosphothreonine is present on T222. At S238 the chain carries Phosphoserine.

Post-translationally, phosphorylated on serine and threonine residues by MPK6.

The protein resides in the nucleus. May modulate WRKY transcription factor activities. In Arabidopsis thaliana (Mouse-ear cress), this protein is VQ motif-containing protein 33.